A 336-amino-acid chain; its full sequence is Atypical chemokine receptor 1 (336 aa).

Residues 1-63 lie on the Extracellular side of the membrane; it reads MGNCLHQAEL…CNLLDDSSLP (63 aa). N-linked (GlcNAc...) asparagine glycosylation is found at Asn-16 and Asn-33. 2 disulfides stabilise this stretch: Cys-51-Cys-276 and Cys-129-Cys-195. Residues 64 to 84 traverse the membrane as a helical segment; the sequence is FFILASVLGILASSTVLFMLF. Over 85–95 the chain is Cytoplasmic; that stretch reads RPLFRWQLCPG. The helical transmembrane segment at 96–116 threads the bilayer; the sequence is WPVLAQLAVGSALFSIVVPIL. Topologically, residues 117–129 are extracellular; it reads APGLGNTRSSALC. The chain crosses the membrane as a helical span at residues 130–153; it reads SLGYCVWYGSAFAQALLLGCHASL. Residues 154–166 are Cytoplasmic-facing; sequence GPKLGAGQVPGLT. The chain crosses the membrane as a helical span at residues 167 to 187; it reads LGLTVGLWGAAALLTVPITLA. The Extracellular segment spans residues 188–207; that stretch reads SGASDGLCTPIYSTELKALQ. A helical membrane pass occupies residues 208-228; sequence ATHTVACFAIFVLLPLGLFGA. Over 229–244 the chain is Cytoplasmic; that stretch reads KGVKKALGMGPGPWMT. A helical membrane pass occupies residues 245–265; sequence ILWIWFIFWWPHGVVLGLDFL. Topologically, residues 266–287 are extracellular; that stretch reads VRSKLLLLPTCLAQQVLDLLLN. The chain crosses the membrane as a helical span at residues 288–308; that stretch reads LAEALTIVHCVATPLLLALFC. The Cytoplasmic segment spans residues 309–336; the sequence is HQATRTLLPSLPLPERWSSPVDTLGSKS.

Belongs to the G-protein coupled receptor 1 family. Atypical chemokine receptor subfamily.

Its subcellular location is the early endosome. It is found in the recycling endosome. The protein resides in the membrane. Functionally, atypical chemokine receptor that controls chemokine levels and localization via high-affinity chemokine binding that is uncoupled from classic ligand-driven signal transduction cascades, resulting instead in chemokine sequestration, degradation, or transcytosis. Also known as interceptor (internalizing receptor) or chemokine-scavenging receptor or chemokine decoy receptor. Has a promiscuous chemokine-binding profile, interacting with inflammatory chemokines of both the CXC and the CC subfamilies but not with homeostatic chemokines. Acts as a receptor for chemokines including CCL2, CCL5, CCL7, CCL11, CCL13, CCL14, CCL17, CXCL5, CXCL6, IL8/CXCL8, CXCL11, GRO, RANTES, MCP-1 and TARC. May regulate chemokine bioavailability and, consequently, leukocyte recruitment through two distinct mechanisms: when expressed in endothelial cells, it sustains the abluminal to luminal transcytosis of tissue-derived chemokines and their subsequent presentation to circulating leukocytes; when expressed in erythrocytes, serves as blood reservoir of cognate chemokines but also as a chemokine sink, buffering potential surges in plasma chemokine levels. The sequence is that of Atypical chemokine receptor 1 (ACKR1) from Sapajus apella (Brown-capped capuchin).